We begin with the raw amino-acid sequence, 217 residues long: Non-structural protein NS3 (217 aa).

The protein belongs to the orbivirus NS3 family.

May play a role in the release of virions from infected cells. The protein is Non-structural protein NS3 (Segment-10) of African horse sickness virus 6 (AHSV-6).